The chain runs to 473 residues: Photosystem II CP43 reaction center protein (473 aa).

The propeptide occupies 1-14 (MKTLYSLRRFYPVE). An N-acetylthreonine modification is found at Thr15. Thr15 is subject to Phosphothreonine. 5 helical membrane-spanning segments follow: residues 69 to 93 (LFEV…PHLA), 134 to 155 (LIGP…KDRS), 178 to 200 (KALY…RKIT), 255 to 275 (KPFA…LSYS), and 291 to 312 (WFNN…ASQA). A [CaMn4O5] cluster-binding site is contributed by Glu367. The chain crosses the membrane as a helical span at residues 447 to 471 (RARAAAAGFEKGIDRDFEPVLSMNP).

It belongs to the PsbB/PsbC family. PsbC subfamily. As to quaternary structure, PSII is composed of 1 copy each of membrane proteins PsbA, PsbB, PsbC, PsbD, PsbE, PsbF, PsbH, PsbI, PsbJ, PsbK, PsbL, PsbM, PsbT, PsbX, PsbY, PsbZ, Psb30/Ycf12, at least 3 peripheral proteins of the oxygen-evolving complex and a large number of cofactors. It forms dimeric complexes. Binds multiple chlorophylls and provides some of the ligands for the Ca-4Mn-5O cluster of the oxygen-evolving complex. It may also provide a ligand for a Cl- that is required for oxygen evolution. PSII binds additional chlorophylls, carotenoids and specific lipids. serves as cofactor.

Its subcellular location is the plastid. It localises to the chloroplast thylakoid membrane. Its function is as follows. One of the components of the core complex of photosystem II (PSII). It binds chlorophyll and helps catalyze the primary light-induced photochemical processes of PSII. PSII is a light-driven water:plastoquinone oxidoreductase, using light energy to abstract electrons from H(2)O, generating O(2) and a proton gradient subsequently used for ATP formation. This Cycas taitungensis (Prince sago) protein is Photosystem II CP43 reaction center protein.